The following is a 284-amino-acid chain: Elongation factor Ts (284 aa).

Residues 80–83 (TDFV) form an involved in Mg(2+) ion dislocation from EF-Tu region.

Belongs to the EF-Ts family.

Its subcellular location is the cytoplasm. Functionally, associates with the EF-Tu.GDP complex and induces the exchange of GDP to GTP. It remains bound to the aminoacyl-tRNA.EF-Tu.GTP complex up to the GTP hydrolysis stage on the ribosome. The polypeptide is Elongation factor Ts (Neisseria meningitidis serogroup A / serotype 4A (strain DSM 15465 / Z2491)).